A 362-amino-acid polypeptide reads, in one-letter code: Probable S-adenosylmethionine-dependent methyltransferase At5g37990 (362 aa).

The S-adenosyl-L-homocysteine site is built by Tyr-19, Cys-66, Asn-71, Asp-107, Ser-136, and Phe-137. Mg(2+)-binding residues include Asn-175, Glu-261, and Phe-263.

Belongs to the methyltransferase superfamily. Type-7 methyltransferase family. As to quaternary structure, homodimer. The cofactor is Mg(2+).

The chain is Probable S-adenosylmethionine-dependent methyltransferase At5g37990 from Arabidopsis thaliana (Mouse-ear cress).